Here is a 305-residue protein sequence, read N- to C-terminus: Nucleotide-binding protein Mjls_2437 (305 aa).

28–35 contacts ATP; that stretch reads GLSGAGRG. Residue 79–82 participates in GTP binding; the sequence is DVRS.

The protein belongs to the RapZ-like family.

Displays ATPase and GTPase activities. In Mycobacterium sp. (strain JLS), this protein is Nucleotide-binding protein Mjls_2437.